The primary structure comprises 319 residues: Sphingomyelinase D (319 aa).

Residues 1–23 (MTPLLRTICAILCILIAVPLTFA) form the signal peptide. Residue His-44 is part of the active site. 3 residues coordinate Mg(2+): Glu-64, Asp-66, and Asp-109. The SMD-tail signature appears at 312 to 319 (ATGADKPW).

It belongs to the sphingomyelinase D/phospholipase D family. It depends on Mg(2+) as a cofactor.

The protein localises to the secreted. It carries out the reaction a sphingomyelin + H2O = an N-acylsphing-4-enine 1-phosphate + choline + H(+). In terms of biological role, catalyzes the hydrolysis of sphingomyelin. Sphingomyelinases D are produced by some spider in their venoms, but also by arthropods such as ticks, or pathogenic bacteria and fungi. They might play a role in pathogenicity through different mechanisms, such as membrane destabilization and host cell penetration, but also pulmonary inflammation and cutaneous lesions. This chain is Sphingomyelinase D, found in Ajellomyces capsulatus (strain G186AR / H82 / ATCC MYA-2454 / RMSCC 2432) (Darling's disease fungus).